The primary structure comprises 1159 residues: Syntaxin-binding protein 5-like (1159 aa).

Residues 1–37 (MKKFRKVLDGLTTSSPVNPGGSPGCGSAAGTPSAAPT) form a disordered region. Residues 25–37 (CGSAAGTPSAAPT) are compositionally biased toward low complexity. WD repeat units follow at residues 67 to 108 (TALA…CHSQ), 115 to 154 (VLQM…SLKF), 159 to 195 (ITFC…GYVI), 214 to 248 (HLSD…DFRI), 254 to 286 (IHSV…TAKP), 307 to 350 (PILK…KAIT), 358 to 392 (IVDF…VVDL), 414 to 491 (TCTA…YKLK), 519 to 628 (QMIS…ELVV), and 642 to 703 (TCLD…STSG). Disordered stretches follow at residues 571–604 (SDTE…SVRD) and 690–770 (LTRS…KAQS). Polar residues-rich tracts occupy residues 699-713 (QSTS…NQVS) and 721-739 (SPTS…SQPC). WD repeat units lie at residues 808–865 (VTTL…TGTV), 874–946 (RFGF…QACL), 951–995 (ITES…LDVS), and 1009–1032 (CFTN…TYSQ). The region spanning 1094-1154 (GIEGMKAAAG…HELMLKCKDK (61 aa)) is the v-SNARE coiled-coil homology domain.

The protein belongs to the WD repeat L(2)GL family.

It localises to the cytoplasm. Its subcellular location is the cell membrane. It is found in the membrane. In terms of biological role, may play a role in vesicle trafficking and exocytosis. This chain is Syntaxin-binding protein 5-like (stxbp5l), found in Danio rerio (Zebrafish).